A 476-amino-acid polypeptide reads, in one-letter code: Aspartyl/glutamyl-tRNA(Asn/Gln) amidotransferase subunit B (476 aa).

The protein belongs to the GatB/GatE family. GatB subfamily. As to quaternary structure, heterotrimer of A, B and C subunits.

It catalyses the reaction L-glutamyl-tRNA(Gln) + L-glutamine + ATP + H2O = L-glutaminyl-tRNA(Gln) + L-glutamate + ADP + phosphate + H(+). It carries out the reaction L-aspartyl-tRNA(Asn) + L-glutamine + ATP + H2O = L-asparaginyl-tRNA(Asn) + L-glutamate + ADP + phosphate + 2 H(+). Allows the formation of correctly charged Asn-tRNA(Asn) or Gln-tRNA(Gln) through the transamidation of misacylated Asp-tRNA(Asn) or Glu-tRNA(Gln) in organisms which lack either or both of asparaginyl-tRNA or glutaminyl-tRNA synthetases. The reaction takes place in the presence of glutamine and ATP through an activated phospho-Asp-tRNA(Asn) or phospho-Glu-tRNA(Gln). This chain is Aspartyl/glutamyl-tRNA(Asn/Gln) amidotransferase subunit B, found in Clostridium botulinum (strain Eklund 17B / Type B).